A 932-amino-acid polypeptide reads, in one-letter code: MTTGFLQKIFGSRNQRLVKQYQKTVTTINALETQIEKLTDDQLRGKTDEFRQRVAAGESLDKLLPEAFAVCREASRRVLKMRHFDVQMIGGMVLHYGKIAEMRTGEGKTLVATLPVYLNALAGRGVHVVTVNDYLAQRDAEWMARLYNFLGLSVGINLSGMEHDQKQQAYAADITYGTNNEFGFDYLRDNMVYETDARVQRALNFAVVDEVDSILIDEARTPLIISGQAEDHTELYVRMNALPPLLERQIGEEKADGTGVEKPGDYTLDEKARQVFLTESGHEKAERLLAEWGLIGEGESLYAPQNITLMHHVYAALRAHTLFHKDQHYVVQNGEVVIVDEFTGRLMAGRRWSDGLHQAVEAKEHVKIQSENQTLASITFQNYFRMYAKLAGMTGTADTEAYEFNEIYGLETVVIPTNRPPKRIDKQDQIYKTAKERYDAVIRDIRDCYERGQPVLVGTTSIENSELLSHLLKQAGLPHEVLNAKQHEREAAIVAEAGRPKRVTIATNMAGRGTDIVLGGNAEKQAAFIEADEAIPADEKARRIQQLHDEWETLHEQVKAAGGLHIIGTERHESRRIDNQLRGRAGRQGDPGSSRFYLSLDDPLLRIFAGDRVRSIMDRLKMPEGEAIEAGIVTRSIESAQRKVEARNFDIRKQLLEYDDVSNDQRKVIYQQRNELLEAHDITETITAMRHGVVTEVVRQFVPEGSIEEQWDVPELEEALRNDWQLDLAIQEMVNESSSITAEEILDAVMTAADEQYEAKVAMVGRESFSAFERSVMLQTVDRLWREHLAALDHLRQGIHLRGYAQKNPKQEYKREAFELFAAMLEAIKQEVTRVVMNVQIQSPEQLEQAAEQIEERGGHLENVEYQHADYAEAGAPVANVAVAAAATATADMVGSAMTHSGPGGEMPKVGRNDPCPCGSGKKYKQCHGKLS.

Residues glutamine 87, 105–109 (GEGKT), and aspartate 515 contribute to the ATP site. Residues cysteine 916, cysteine 918, cysteine 927, and histidine 928 each contribute to the Zn(2+) site.

This sequence belongs to the SecA family. As to quaternary structure, monomer and homodimer. Part of the essential Sec protein translocation apparatus which comprises SecA, SecYEG and auxiliary proteins SecDF-YajC and YidC. The cofactor is Zn(2+).

The protein resides in the cell inner membrane. The protein localises to the cytoplasm. It carries out the reaction ATP + H2O + cellular proteinSide 1 = ADP + phosphate + cellular proteinSide 2.. Functionally, part of the Sec protein translocase complex. Interacts with the SecYEG preprotein conducting channel. Has a central role in coupling the hydrolysis of ATP to the transfer of proteins into and across the cell membrane, serving both as a receptor for the preprotein-SecB complex and as an ATP-driven molecular motor driving the stepwise translocation of polypeptide chains across the membrane. This chain is Protein translocase subunit SecA, found in Burkholderia lata (strain ATCC 17760 / DSM 23089 / LMG 22485 / NCIMB 9086 / R18194 / 383).